A 227-amino-acid chain; its full sequence is Ribosomal RNA large subunit methyltransferase E (227 aa).

The S-adenosyl-L-methionine site is built by G78, W80, D103, D119, and D143. K183 acts as the Proton acceptor in catalysis.

It belongs to the class I-like SAM-binding methyltransferase superfamily. RNA methyltransferase RlmE family.

The protein localises to the cytoplasm. The catalysed reaction is uridine(2552) in 23S rRNA + S-adenosyl-L-methionine = 2'-O-methyluridine(2552) in 23S rRNA + S-adenosyl-L-homocysteine + H(+). Functionally, specifically methylates the uridine in position 2552 of 23S rRNA at the 2'-O position of the ribose in the fully assembled 50S ribosomal subunit. The polypeptide is Ribosomal RNA large subunit methyltransferase E (Rickettsia felis (strain ATCC VR-1525 / URRWXCal2) (Rickettsia azadi)).